The following is a 520-amino-acid chain: Dihydropyrimidinase 2 (520 aa).

H59, H61, and K152 together coordinate Zn(2+). An N6-carboxylysine modification is found at K152. Y157 serves as a coordination point for substrate. H185 and H241 together coordinate Zn(2+). S291 provides a ligand contact to substrate. Position 319 (D319) interacts with Zn(2+). N340 serves as a coordination point for substrate.

This sequence belongs to the metallo-dependent hydrolases superfamily. Hydantoinase/dihydropyrimidinase family. As to quaternary structure, homotetramer. Zn(2+) is required as a cofactor. Post-translationally, carboxylation allows a single lysine to coordinate two zinc ions. As to expression, body wall muscles.

It catalyses the reaction 5,6-dihydrouracil + H2O = 3-(carbamoylamino)propanoate + H(+). This Caenorhabditis elegans protein is Dihydropyrimidinase 2 (dhp-2).